A 242-amino-acid chain; its full sequence is HTH-type transcriptional regulator GadW (242 aa).

The region spanning 139–236 (GKVERLISFD…GVTPHQFSQH (98 aa)) is the HTH araC/xylS-type domain. DNA-binding regions (H-T-H motif) lie at residues 156–177 (RDIAERMYTSESLIKKKLQDEN) and 203–226 (LHTIAEKCGYSSTSYFINTFRQYY).

In terms of assembly, homodimer.

Its function is as follows. Depending on the conditions (growth phase and medium), acts as a positive or negative regulator of gadA and gadBC. Repression occurs directly or via the repression of the expression of gadX. Activation occurs directly by the binding of GadW to the gadA and gadBC promoters. The polypeptide is HTH-type transcriptional regulator GadW (gadW) (Escherichia coli O6:H1 (strain CFT073 / ATCC 700928 / UPEC)).